A 1292-amino-acid polypeptide reads, in one-letter code: SH3 and multiple ankyrin repeat domains protein 2 (1292 aa).

The region spanning 56 to 150 (TVVLQKKDNE…HLVLKVVTVT (95 aa)) is the PDZ domain. Disordered regions lie at residues 155 to 176 (PDDT…TALS), 331 to 393 (MPDA…SDNV), 488 to 508 (IKEP…METD), 604 to 656 (SSNA…KLLD), 671 to 743 (ALKE…EKKN), 774 to 811 (LTES…SECG), and 938 to 968 (IEEV…TLSS). Residues 338–354 (IPPPPATLPPSPPPPSP) show a composition bias toward pro residues. Low complexity predominate over residues 355–365 (SSFNSPKSPAP). Polar residues predominate over residues 375 to 384 (FTQNSGTKSP). A compositionally biased stretch (low complexity) spans 492-504 (STSSSGKSSQGSS). A compositionally biased stretch (polar residues) spans 604-623 (SSNAFTNNDSSHQGDVSNAR). A compositionally biased stretch (basic and acidic residues) spans 719–743 (KRQETESKHEPDSSKEEKRQGEKKN). Over residues 941–952 (VDSRSGSDHHLE) the composition is skewed to basic and acidic residues. The segment covering 953 to 968 (TTSTISTVSSISTLSS) has biased composition (low complexity). The SH3-binding motif lies at 991–997 (PPVPPKP). The interval 1087–1115 (TKTGEGLDSPTGMKTASLSTRGTDALSTV) is disordered. The segment covering 1098–1115 (GMKTASLSTRGTDALSTV) has biased composition (polar residues). The region spanning 1229 to 1292 (WTKQDVAEWL…ERALKQLLDR (64 aa)) is the SAM domain.

This sequence belongs to the SHANK family.

The protein localises to the cytoplasm. It localises to the synapse. It is found in the postsynaptic density. Its function is as follows. Seems to be an adapter protein in the postsynaptic density (PSD) of excitatory synapses that interconnects receptors of the postsynaptic membrane including NMDA-type and metabotropic glutamate receptors, and the actin-based cytoskeleton. May play a role in the structural and functional organization of the dendritic spine and synaptic junction. The protein is SH3 and multiple ankyrin repeat domains protein 2 (shank2) of Xenopus laevis (African clawed frog).